The following is a 101-amino-acid chain: Small ribosomal subunit protein uS14 (101 aa).

Belongs to the universal ribosomal protein uS14 family. Part of the 30S ribosomal subunit. Contacts proteins S3 and S10.

Its function is as follows. Binds 16S rRNA, required for the assembly of 30S particles and may also be responsible for determining the conformation of the 16S rRNA at the A site. The polypeptide is Small ribosomal subunit protein uS14 (Rhizobium meliloti (strain 1021) (Ensifer meliloti)).